We begin with the raw amino-acid sequence, 146 residues long: Protein MGF 100-3L (146 aa).

This sequence belongs to the asfivirus MGF 100 family.

Its function is as follows. Plays a role in virus cell tropism, and may be required for efficient virus replication in macrophages. The polypeptide is Protein MGF 100-3L (Ornithodoros (relapsing fever ticks)).